The chain runs to 182 residues: Adenine phosphoribosyltransferase (182 aa).

This sequence belongs to the purine/pyrimidine phosphoribosyltransferase family. As to quaternary structure, homodimer.

It is found in the cytoplasm. It carries out the reaction AMP + diphosphate = 5-phospho-alpha-D-ribose 1-diphosphate + adenine. The protein operates within purine metabolism; AMP biosynthesis via salvage pathway; AMP from adenine: step 1/1. Its function is as follows. Catalyzes a salvage reaction resulting in the formation of AMP, that is energically less costly than de novo synthesis. The protein is Adenine phosphoribosyltransferase of Pseudomonas putida (strain GB-1).